We begin with the raw amino-acid sequence, 666 residues long: Long chain acyl-CoA synthetase 4 (666 aa).

228-239 (IMYTSGTTGDPK) serves as a coordination point for ATP. Residues 495 to 519 (DGWLHTGDVGEWQPDGSMKIIDRKK) are fatty acid-binding.

This sequence belongs to the ATP-dependent AMP-binding enzyme family. Mg(2+) serves as cofactor.

It carries out the reaction a long-chain fatty acid + ATP + CoA = a long-chain fatty acyl-CoA + AMP + diphosphate. It participates in lipid metabolism; fatty acid metabolism. Functionally, activation of long-chain fatty acids for both synthesis of cellular lipids, and degradation via beta-oxidation. Preferentially uses palmitate, palmitoleate, oleate and linoleate. This Arabidopsis thaliana (Mouse-ear cress) protein is Long chain acyl-CoA synthetase 4 (LACS4).